A 1072-amino-acid polypeptide reads, in one-letter code: Vacuolar membrane protease (1072 aa).

Over 1–9 (MINPISFRP) the chain is Cytoplasmic. The helical transmembrane segment at 10–30 (GPVTFWTTLIYLALLIPIVII) threads the bilayer. Over 31 to 404 (NEKTPAAPKT…SFVLFGLRGM (374 aa)) the chain is Vacuolar. N-linked (GlcNAc...) asparagine glycosylation is found at asparagine 48, asparagine 116, asparagine 119, and asparagine 128. Residues histidine 185 and aspartate 197 each contribute to the Zn(2+) site. Residue glutamate 231 is the Proton acceptor of the active site. Residues glutamate 232, glutamate 257, and histidine 330 each coordinate Zn(2+). Residues 405-425 (FAWSLTLLIATPLVLVGITWL) traverse the membrane as a helical segment. Topologically, residues 426 to 457 (LRNLDKDYFFTSTVKTKEHPEYEAVPIGGWKG) are cytoplasmic. Residues 458-478 (FFRFPFALGVAVFFTISSALL) traverse the membrane as a helical segment. The Vacuolar segment spans residues 479 to 492 (MNKVNPLIVYSSRY). The helical transmembrane segment at 493–513 (SVWVMMVSIFYFSFWMIMRGA) threads the bilayer. Topologically, residues 514-523 (NFVRPSALHR) are cytoplasmic. The helical transmembrane segment at 524 to 544 (GYANLWLFVFGWIVLVAVTAL) threads the bilayer. Residues 545–554 (EDRRRIAAGY) lie on the Vacuolar side of the membrane. Residues 555-575 (IFVFLESAIFLSCLISFVELL) form a helical membrane-spanning segment. Residues 576–747 (AVPRKSSYAL…YDHEQEWSGH (172 aa)) lie on the Cytoplasmic side of the membrane. The interval 593–713 (GQEHDHNGYQ…GTNDRGRTTF (121 aa)) is disordered. Basic and acidic residues predominate over residues 606–617 (DSTDEPSLRARA). Polar residues predominate over residues 643–661 (GTTNGLSTAPSVAAHSSQP). Residues 748-768 (LPSWAWFFQFLLLGPFMIILA) traverse the membrane as a helical segment. Residues 769 to 789 (AQTGLMLTDAVYQTGSDGSKL) lie on the Vacuolar side of the membrane. The helical transmembrane segment at 790 to 810 (ITPYLIIFVFTVLLILPLTPF) threads the bilayer. Residues 811-817 (IHRVTHH) are Cytoplasmic-facing. The helical transmembrane segment at 818–838 (IPVFLLVVFIVTLTYNLIAFP) threads the bilayer. The Vacuolar portion of the chain corresponds to 839 to 1072 (FSANNRYKTF…VEGRKAFKIV (234 aa)). N-linked (GlcNAc...) asparagine glycosylation is found at asparagine 932 and asparagine 974.

The protein belongs to the peptidase M28 family. Requires Zn(2+) as cofactor.

It is found in the vacuole membrane. In terms of biological role, may be involved in vacuolar sorting and osmoregulation. The sequence is that of Vacuolar membrane protease from Neurospora crassa (strain ATCC 24698 / 74-OR23-1A / CBS 708.71 / DSM 1257 / FGSC 987).